The primary structure comprises 389 residues: 1-deoxy-D-xylulose 5-phosphate reductoisomerase (389 aa).

NADPH contacts are provided by threonine 10, glycine 11, serine 12, isoleucine 13, asparagine 38, and asparagine 122. Residue lysine 123 participates in 1-deoxy-D-xylulose 5-phosphate binding. Glutamate 124 contributes to the NADPH binding site. Aspartate 148 provides a ligand contact to Mn(2+). Residues serine 149, glutamate 150, serine 173, and histidine 196 each contribute to the 1-deoxy-D-xylulose 5-phosphate site. Glutamate 150 serves as a coordination point for Mn(2+). Glycine 202 contacts NADPH. Residues serine 209, asparagine 214, lysine 215, and glutamate 218 each contribute to the 1-deoxy-D-xylulose 5-phosphate site. Glutamate 218 provides a ligand contact to Mn(2+).

It belongs to the DXR family. Mg(2+) is required as a cofactor. Mn(2+) serves as cofactor.

The enzyme catalyses 2-C-methyl-D-erythritol 4-phosphate + NADP(+) = 1-deoxy-D-xylulose 5-phosphate + NADPH + H(+). It functions in the pathway isoprenoid biosynthesis; isopentenyl diphosphate biosynthesis via DXP pathway; isopentenyl diphosphate from 1-deoxy-D-xylulose 5-phosphate: step 1/6. Its function is as follows. Catalyzes the NADPH-dependent rearrangement and reduction of 1-deoxy-D-xylulose-5-phosphate (DXP) to 2-C-methyl-D-erythritol 4-phosphate (MEP). The polypeptide is 1-deoxy-D-xylulose 5-phosphate reductoisomerase (Wolbachia sp. subsp. Brugia malayi (strain TRS)).